The primary structure comprises 85 residues: RNA-binding protein Hfq (85 aa).

The region spanning 9–68 (DPFLNALRRERIPVSIYLVNGIKLQGQVESFDQFVILLKNTVSQMVYKHAISTVVPARPV) is the Sm domain.

Belongs to the Hfq family. Homohexamer.

Functionally, RNA chaperone that binds small regulatory RNA (sRNAs) and mRNAs to facilitate mRNA translational regulation in response to envelope stress, environmental stress and changes in metabolite concentrations. Also binds with high specificity to tRNAs. This Tolumonas auensis (strain DSM 9187 / NBRC 110442 / TA 4) protein is RNA-binding protein Hfq.